A 1345-amino-acid polypeptide reads, in one-letter code: DNA-directed RNA polymerase subunit beta (1345 aa).

The protein belongs to the RNA polymerase beta chain family. As to quaternary structure, the RNAP catalytic core consists of 2 alpha, 1 beta, 1 beta' and 1 omega subunit. When a sigma factor is associated with the core the holoenzyme is formed, which can initiate transcription.

The enzyme catalyses RNA(n) + a ribonucleoside 5'-triphosphate = RNA(n+1) + diphosphate. Functionally, DNA-dependent RNA polymerase catalyzes the transcription of DNA into RNA using the four ribonucleoside triphosphates as substrates. This chain is DNA-directed RNA polymerase subunit beta, found in Shewanella sp. (strain ANA-3).